Reading from the N-terminus, the 217-residue chain is Uracil-DNA glycosylase (217 aa).

Catalysis depends on aspartate 62, which acts as the Proton acceptor.

The protein belongs to the uracil-DNA glycosylase (UDG) superfamily. UNG family.

It localises to the cytoplasm. It carries out the reaction Hydrolyzes single-stranded DNA or mismatched double-stranded DNA and polynucleotides, releasing free uracil.. In terms of biological role, excises uracil residues from the DNA which can arise as a result of misincorporation of dUMP residues by DNA polymerase or due to deamination of cytosine. The protein is Uracil-DNA glycosylase of Streptococcus pyogenes serotype M49 (strain NZ131).